Reading from the N-terminus, the 303-residue chain is Probable phytol kinase, chloroplastic (303 aa).

A chloroplast-targeting transit peptide spans 1-49 (MAAAAAWTGAASPNSLLLSRSPPHAAALAPSPGSSMRRRLLLGVGTPAV). The next 6 membrane-spanning stretches (helical) occupy residues 98-118 (VVHV…SNST), 122-144 (YFAA…RLYT), 168-188 (YVLV…IGIV), 227-247 (FISG…LGYI), 254-274 (ALGK…VPVT), and 276-296 (VVDD…LLFS).

It belongs to the polyprenol kinase family.

The protein localises to the plastid. Its subcellular location is the chloroplast membrane. It carries out the reaction phytol + CTP = phytyl phosphate + CDP + H(+). Its pathway is cofactor biosynthesis; tocopherol biosynthesis. Its function is as follows. Involved in the activation and reutilization of phytol from chlorophyll degradation in plant metabolism, including tocopherol biosynthesis. Catalyzes the conversion of phytol to phytol monophosphate (PMP). The protein is Probable phytol kinase, chloroplastic of Zea mays (Maize).